A 220-amino-acid chain; its full sequence is Iron-sulfur cluster repair protein YtfE (220 aa).

It belongs to the RIC family. YtfE subfamily. In terms of assembly, homodimer.

The protein localises to the cytoplasm. In terms of biological role, di-iron-containing protein involved in the repair of iron-sulfur clusters damaged by oxidative and nitrosative stress conditions. The chain is Iron-sulfur cluster repair protein YtfE from Salmonella schwarzengrund (strain CVM19633).